We begin with the raw amino-acid sequence, 435 residues long: Methylenetetrahydrofolate--tRNA-(uracil-5-)-methyltransferase TrmFO (435 aa).

Position 10 to 15 (10 to 15 (GAGLAG)) interacts with FAD.

This sequence belongs to the MnmG family. TrmFO subfamily. It depends on FAD as a cofactor.

It is found in the cytoplasm. The enzyme catalyses uridine(54) in tRNA + (6R)-5,10-methylene-5,6,7,8-tetrahydrofolate + NADH + H(+) = 5-methyluridine(54) in tRNA + (6S)-5,6,7,8-tetrahydrofolate + NAD(+). The catalysed reaction is uridine(54) in tRNA + (6R)-5,10-methylene-5,6,7,8-tetrahydrofolate + NADPH + H(+) = 5-methyluridine(54) in tRNA + (6S)-5,6,7,8-tetrahydrofolate + NADP(+). Its function is as follows. Catalyzes the folate-dependent formation of 5-methyl-uridine at position 54 (M-5-U54) in all tRNAs. This is Methylenetetrahydrofolate--tRNA-(uracil-5-)-methyltransferase TrmFO from Bacillus velezensis (strain DSM 23117 / BGSC 10A6 / LMG 26770 / FZB42) (Bacillus amyloliquefaciens subsp. plantarum).